The primary structure comprises 193 residues: Large ribosomal subunit protein bL25 (193 aa).

The protein belongs to the bacterial ribosomal protein bL25 family. CTC subfamily. Part of the 50S ribosomal subunit; part of the 5S rRNA/L5/L18/L25 subcomplex. Contacts the 5S rRNA. Binds to the 5S rRNA independently of L5 and L18.

In terms of biological role, this is one of the proteins that binds to the 5S RNA in the ribosome where it forms part of the central protuberance. The protein is Large ribosomal subunit protein bL25 of Hydrogenovibrio crunogenus (strain DSM 25203 / XCL-2) (Thiomicrospira crunogena).